A 415-amino-acid chain; its full sequence is Mitochondrial tRNA-specific 2-thiouridylase 1 (415 aa).

ATP-binding positions include 37 to 44 (AMSGGVDS) and methionine 63. An interaction with target base in tRNA region spans residues 124–126 (NPD). Cysteine 129 functions as the Nucleophile in the catalytic mechanism. Cysteine 129 and cysteine 234 are disulfide-bonded. An ATP-binding site is contributed by glycine 159. The interaction with tRNA stretch occupies residues 183-185 (KDQ). Catalysis depends on cysteine 234, which acts as the Cysteine persulfide intermediate. An interaction with tRNA region spans residues 356–357 (RH).

It belongs to the MnmA/TRMU family.

It is found in the mitochondrion. It catalyses the reaction 5-taurinomethyluridine(34) in tRNA + S-sulfanyl-L-cysteinyl-[protein] + AH2 + ATP = 5-taurinomethyl-2-thiouridine(34) in tRNA + L-cysteinyl-[protein] + A + AMP + diphosphate + H(+). Its function is as follows. Catalyzes the 2-thiolation of uridine at the wobble position (U34) of mitochondrial tRNA(Lys), tRNA(Glu) and tRNA(Gln). Required for the formation of 5-taurinomethyl-2-thiouridine (tm5s2U) of mitochondrial tRNA(Lys), tRNA(Glu), and tRNA(Gln) at the wobble position. ATP is required to activate the C2 atom of the wobble base. The chain is Mitochondrial tRNA-specific 2-thiouridylase 1 from Schizosaccharomyces pombe (strain 972 / ATCC 24843) (Fission yeast).